Here is a 444-residue protein sequence, read N- to C-terminus: C4-dicarboxylate transport protein (444 aa).

9 consecutive transmembrane segments (helical) span residues 18–40, 53–75, 90–112, 142–159, 163–180, 201–222, 232–254, 327–349, and 364–386; these read FYSHLYVQVLVAIAAGILLGHFY, AFIKLVKMIIAPVIFLTVATGIA, AMLYFLTFSTLALIIGLIVANVV, IVGFLTNIIPTTIVGAFA, ILQVLFFSVLFGIALAMV, LVAILMKAAPIGAFGAMAFTIG, LAMLIGTFYITSLLFVFIVLGAV, LFIAQATGIHLSWGDQILLLLVA, and FITLAATLSVVPSVPVAGMALIL.

Belongs to the dicarboxylate/amino acid:cation symporter (DAACS) (TC 2.A.23) family.

Its subcellular location is the cell inner membrane. Its function is as follows. Responsible for the transport of dicarboxylates such as succinate, fumarate, and malate from the periplasm across the inner membrane. This transport system plays an important role in the energy supply of rhizobium-legume symbionts. The sequence is that of C4-dicarboxylate transport protein (dctA) from Rhizobium leguminosarum.